A 277-amino-acid polypeptide reads, in one-letter code: Undecaprenyl-diphosphatase (277 aa).

8 helical membrane-spanning segments follow: residues 11–31, 47–67, 96–116, 123–143, 153–173, 197–217, 227–247, and 254–274; these read WWQALILGMVQGITEFLPISS, AGASFTAVIQLGSLGAVLIYF, VGILVGTVPIVVAGWAIKAIW, LWVIATAAIGLAVLLGWAEQT, LGIWDGIWVGLAQALSLIPGV, SFLLGIPALFLAGVVEFISEF, LGTLSAFVFSYLSIDWLIQFL, and LFIVYRIGFGLFIILGLALGF.

This sequence belongs to the UppP family.

Its subcellular location is the cell inner membrane. It catalyses the reaction di-trans,octa-cis-undecaprenyl diphosphate + H2O = di-trans,octa-cis-undecaprenyl phosphate + phosphate + H(+). Catalyzes the dephosphorylation of undecaprenyl diphosphate (UPP). Confers resistance to bacitracin. This Synechococcus sp. (strain JA-2-3B'a(2-13)) (Cyanobacteria bacterium Yellowstone B-Prime) protein is Undecaprenyl-diphosphatase.